The chain runs to 594 residues: CDPK-related kinase 4 (594 aa).

A disordered region spans residues 1-131; sequence MGHCYSRNIS…DSGGGERLDK (131 aa). The N-myristoyl glycine moiety is linked to residue Gly2. The span at 37–58 shows a compositional bias: polar residues; that stretch reads IPQSPVASGTPEVNSYNISPFQ. Residues 116-131 are compositionally biased toward basic and acidic residues; that stretch reads VVDHGGDSGGGERLDK. One can recognise a Protein kinase domain in the interval 143–405; it reads YELGKEVGRG…AAQALAHPWL (263 aa). ATP-binding positions include 149–157 and Lys175; that span reads VGRGHFGHT. Asp271 (proton acceptor) is an active-site residue. A Phosphoserine modification is found at Ser311. The autoinhibitory domain stretch occupies residues 409 to 439; it reads NPGLLLDFSVYKLVKSYIRASPFRRSALKAL. Positions 428-448 are calmodulin binding (CaMBD); that stretch reads ASPFRRSALKALSKAIPDEEL. EF-hand domains follow at residues 446–481, 482–517, 518–557, and 558–587; these read EELV…ATDA, MMES…VYQL, EALE…GPSA, and YPLL…VTVR. 8 residues coordinate Ca(2+): Asp462, Lys501, Glu506, Asn539, Glu546, Ser567, Asp569, and Lys571. The residue at position 573 (Ser573) is a Phosphoserine.

Belongs to the protein kinase superfamily. Ser/Thr protein kinase family. CDPK subfamily. Binds calmodulin (CaM) in a calcium-dependent manner. In terms of processing, autophosphorylated.

Its subcellular location is the cell membrane. It catalyses the reaction L-seryl-[protein] + ATP = O-phospho-L-seryl-[protein] + ADP + H(+). It carries out the reaction L-threonyl-[protein] + ATP = O-phospho-L-threonyl-[protein] + ADP + H(+). Its activity is regulated as follows. Activated by calcium and calmodulin. Autophosphorylation may play an important role in the regulation of the kinase activity. In terms of biological role, may play a role in signal transduction pathways that involve calcium as a second messenger. This chain is CDPK-related kinase 4 (CRK4), found in Arabidopsis thaliana (Mouse-ear cress).